We begin with the raw amino-acid sequence, 225 residues long: MQRPSGSREVRKAVSAVSASKKEQATRVKKHVVRRQKGTMAAAPKSHVHVKKLTVEEGVRTGKNSVHQLQAQVDTATQQESSQGPVLLSQLPETTSVPYTPETMGQQLTVSLSGEPYGPSAMPSMCPSLILQPCATTDPMLLQPQGSSASNQASVSATLEWQEMLEAAEALLALKNSSQTRHQPCGMPGTAGERGLQLPNPSMPPRPASSGSLPSGHLDCMSLLT.

Basic and acidic residues predominate over residues 1–12 (MQRPSGSREVRK). Disordered stretches follow at residues 1–49 (MQRP…SHVH) and 179–216 (QTRH…LPSG). Residues 27–37 (RVKKHVVRRQK) show a composition bias toward basic residues.

It belongs to the DMRT family.

In Rattus norvegicus (Rat), this protein is Doublesex- and mab-3-related transcription factor C1 (Dmrtc1).